The following is a 290-amino-acid chain: 4-hydroxy-tetrahydrodipicolinate synthase (290 aa).

Thr-46 lines the pyruvate pocket. The active-site Proton donor/acceptor is the Tyr-134. Lys-163 (schiff-base intermediate with substrate) is an active-site residue. Val-205 serves as a coordination point for pyruvate.

It belongs to the DapA family. As to quaternary structure, homotetramer; dimer of dimers.

It is found in the cytoplasm. The enzyme catalyses L-aspartate 4-semialdehyde + pyruvate = (2S,4S)-4-hydroxy-2,3,4,5-tetrahydrodipicolinate + H2O + H(+). The protein operates within amino-acid biosynthesis; L-lysine biosynthesis via DAP pathway; (S)-tetrahydrodipicolinate from L-aspartate: step 3/4. Catalyzes the condensation of (S)-aspartate-beta-semialdehyde [(S)-ASA] and pyruvate to 4-hydroxy-tetrahydrodipicolinate (HTPA). The polypeptide is 4-hydroxy-tetrahydrodipicolinate synthase (Bacillus subtilis (strain 168)).